Consider the following 86-residue polypeptide: Omega-theraphotoxin-Hhn1a 2 (86 aa).

The N-terminal stretch at 1 to 21 is a signal peptide; the sequence is MKSIVFVALLGLALLAVVCSA. The propeptide occupies 22 to 50; it reads SEDAHKELLKEVVRAMVVDKTDAVQAEER. 3 disulfides stabilise this stretch: C52–C66, C59–C71, and C65–C78.

It belongs to the neurotoxin 10 (Hwtx-1) family. 17 (Hntx-9) subfamily. In terms of tissue distribution, expressed by the venom gland.

The protein localises to the secreted. Functionally, ion channel inhibitor. In Cyriopagopus hainanus (Chinese bird spider), this protein is Omega-theraphotoxin-Hhn1a 2.